A 223-amino-acid chain; its full sequence is Phosphoribosylformylglycinamidine synthase subunit PurQ (223 aa).

One can recognise a Glutamine amidotransferase type-1 domain in the interval 3–223 (FAVLVFPGSN…MVKSWREQNV (221 aa)). Cys85 (nucleophile) is an active-site residue. Residues His193 and Glu195 contribute to the active site.

Part of the FGAM synthase complex composed of 1 PurL, 1 PurQ and 2 PurS subunits.

It is found in the cytoplasm. It carries out the reaction N(2)-formyl-N(1)-(5-phospho-beta-D-ribosyl)glycinamide + L-glutamine + ATP + H2O = 2-formamido-N(1)-(5-O-phospho-beta-D-ribosyl)acetamidine + L-glutamate + ADP + phosphate + H(+). The catalysed reaction is L-glutamine + H2O = L-glutamate + NH4(+). The protein operates within purine metabolism; IMP biosynthesis via de novo pathway; 5-amino-1-(5-phospho-D-ribosyl)imidazole from N(2)-formyl-N(1)-(5-phospho-D-ribosyl)glycinamide: step 1/2. In terms of biological role, part of the phosphoribosylformylglycinamidine synthase complex involved in the purines biosynthetic pathway. Catalyzes the ATP-dependent conversion of formylglycinamide ribonucleotide (FGAR) and glutamine to yield formylglycinamidine ribonucleotide (FGAM) and glutamate. The FGAM synthase complex is composed of three subunits. PurQ produces an ammonia molecule by converting glutamine to glutamate. PurL transfers the ammonia molecule to FGAR to form FGAM in an ATP-dependent manner. PurS interacts with PurQ and PurL and is thought to assist in the transfer of the ammonia molecule from PurQ to PurL. This Staphylococcus epidermidis (strain ATCC 35984 / DSM 28319 / BCRC 17069 / CCUG 31568 / BM 3577 / RP62A) protein is Phosphoribosylformylglycinamidine synthase subunit PurQ.